Here is a 260-residue protein sequence, read N- to C-terminus: Carbonic anhydrase 2 (260 aa).

At S2 the chain carries N-acetylserine. S2 carries the post-translational modification Phosphoserine. Positions 3–259 constitute an Alpha-carbonic anhydrase domain; that stretch reads HHWGYSKHNG…LKNRKIKASF (257 aa). Residue H64 is the Proton acceptor of the active site. N67 is a catalytic residue. S87 carries the post-translational modification Phosphoserine. Positions 94, 96, and 119 each coordinate Zn(2+). Y127 is a catalytic residue. S165 is modified (phosphoserine). Residue 198–199 participates in substrate binding; that stretch reads TT.

Belongs to the alpha-carbonic anhydrase family. Interacts with SLC4A4. Interaction with SLC4A7 regulates SLC4A7 transporter activity. Interacts with SLC26A6. Zn(2+) is required as a cofactor.

The protein resides in the cytoplasm. It localises to the cell membrane. The enzyme catalyses hydrogencarbonate + H(+) = CO2 + H2O. The catalysed reaction is urea = cyanamide + H2O. Its activity is regulated as follows. Inhibited by acetazolamide. Catalyzes the reversible hydration of carbon dioxide. Can also hydrate cyanamide to urea. Involved in the regulation of fluid secretion into the anterior chamber of the eye. Essential for bone resorption and osteoclast differentiation. Contributes to intracellular pH regulation in the duodenal upper villous epithelium during proton-coupled peptide absorption. Stimulates the chloride-bicarbonate exchange activity of SLC26A6. In Mus musculus (Mouse), this protein is Carbonic anhydrase 2 (Ca2).